The primary structure comprises 119 residues: Large ribosomal subunit protein bL20 (119 aa).

It belongs to the bacterial ribosomal protein bL20 family.

Its function is as follows. Binds directly to 23S ribosomal RNA and is necessary for the in vitro assembly process of the 50S ribosomal subunit. It is not involved in the protein synthesizing functions of that subunit. This chain is Large ribosomal subunit protein bL20, found in Coxiella burnetii (strain CbuK_Q154) (Coxiella burnetii (strain Q154)).